Reading from the N-terminus, the 146-residue chain is Probable gamma-secretase subunit PEN-2 (146 aa).

Residues 1–26 (MEATRSDDPSLNPIRNRNPNPNPNPN) are disordered. Topologically, residues 1-61 (MEATRSDDPS…SVDYARRFYK (61 aa)) are lumenal. Positions 9–19 (PSLNPIRNRNP) are enriched in low complexity. Residues 62 to 82 (FGFALLPWLWFVNCFYFWPVL) traverse the membrane as a helical segment. The Cytoplasmic portion of the chain corresponds to 83 to 98 (RHSRAFPQIRNYVVRS). Residues 99–119 (AIGFSVFTALLSAWALTFSIG) form a helical membrane-spanning segment. Residues 120–146 (GEQLFGPLYDKLVMYNVADRLGLSGLA) are Lumenal-facing.

This sequence belongs to the PEN-2 family. In terms of assembly, probable component of the gamma-secretase complex, a complex composed of a presenilin homodimer, nicastrin, APH1 and PEN2.

The protein localises to the membrane. Probable subunit of the gamma-secretase complex, an endoprotease complex that catalyzes the intramembrane cleavage of integral membrane proteins such as Notch receptors. This Arabidopsis thaliana (Mouse-ear cress) protein is Probable gamma-secretase subunit PEN-2.